A 213-amino-acid polypeptide reads, in one-letter code: Thiamine import ATP-binding protein ThiQ (213 aa).

The 212-residue stretch at 1–212 (MIELNVTFDY…EQGRIVADQL (212 aa)) folds into the ABC transporter domain. ATP is bound at residue 31-38 (GESGAGKS).

This sequence belongs to the ABC transporter superfamily. Thiamine importer (TC 3.A.1.19.1) family. The complex is composed of two ATP-binding proteins (ThiQ), two transmembrane proteins (ThiP) and a solute-binding protein (ThiB).

It is found in the cell inner membrane. The catalysed reaction is thiamine(out) + ATP + H2O = thiamine(in) + ADP + phosphate + H(+). In terms of biological role, part of the ABC transporter complex ThiBPQ involved in thiamine import. Responsible for energy coupling to the transport system. This chain is Thiamine import ATP-binding protein ThiQ, found in Haemophilus ducreyi (strain 35000HP / ATCC 700724).